The sequence spans 637 residues: Sodium-dependent nutrient amino acid transporter 1 (637 aa).

The segment covering 1 to 17 has biased composition (polar residues); sequence MELKTMPQNGANAGTQH. The segment at 1–39 is disordered; the sequence is MELKTMPQNGANAGTQHNNNSNNKPDNNEKEAQKKEPER. Residues 1-47 lie on the Cytoplasmic side of the membrane; sequence MELKTMPQNGANAGTQHNNNSNNKPDNNEKEAQKKEPERTNWSNGLE. Over residues 26–39 the composition is skewed to basic and acidic residues; the sequence is DNNEKEAQKKEPER. The next 3 helical transmembrane spans lie at 48-68, 75-95, and 128-148; these read FLMS…FPFT, GAFL…MYYL, and TICI…YLFV. 2 N-linked (GlcNAc...) asparagine glycosylation sites follow: N181 and N195. 9 consecutive transmembrane segments (helical) span residues 225-245, 254-274, 303-323, 337-357, 397-417, 443-463, 470-490, 515-535, and 549-569; these read PDWK…LVIM, AAYF…GRAV, AVVQ…MFAS, IVTT…FAIL, LFSA…IVAL, ICGF…ILTL, TYVV…IYGL, FFTP…ISPI, and AGWV…WWYI.

Belongs to the sodium:neurotransmitter symporter (SNF) (TC 2.A.22) family.

It localises to the membrane. Unusual broad substrate spectrum amino acid:sodium cotransporter that promotes absorption of the D isomers of essential amino acids. Neutral amino acids are the preferred substrates, especially methionine and phenylalanine. The chain is Sodium-dependent nutrient amino acid transporter 1 from Drosophila virilis (Fruit fly).